Reading from the N-terminus, the 207-residue chain is Protein GrpE (207 aa).

A disordered region spans residues Met-1–Glu-33.

Belongs to the GrpE family. In terms of assembly, homodimer.

It is found in the cytoplasm. In terms of biological role, participates actively in the response to hyperosmotic and heat shock by preventing the aggregation of stress-denatured proteins, in association with DnaK and GrpE. It is the nucleotide exchange factor for DnaK and may function as a thermosensor. Unfolded proteins bind initially to DnaJ; upon interaction with the DnaJ-bound protein, DnaK hydrolyzes its bound ATP, resulting in the formation of a stable complex. GrpE releases ADP from DnaK; ATP binding to DnaK triggers the release of the substrate protein, thus completing the reaction cycle. Several rounds of ATP-dependent interactions between DnaJ, DnaK and GrpE are required for fully efficient folding. The polypeptide is Protein GrpE (Rhodopseudomonas palustris (strain BisA53)).